Consider the following 359-residue polypeptide: Phosphoserine aminotransferase (359 aa).

Arg41 contacts L-glutamate. Pyridoxal 5'-phosphate is bound by residues Ala75–Ser76, Trp99, Thr147, Asp166, and Gln189. Lys190 bears the N6-(pyridoxal phosphate)lysine mark. Asn231–Thr232 is a binding site for pyridoxal 5'-phosphate.

This sequence belongs to the class-V pyridoxal-phosphate-dependent aminotransferase family. SerC subfamily. In terms of assembly, homodimer. Requires pyridoxal 5'-phosphate as cofactor.

Its subcellular location is the cytoplasm. The catalysed reaction is O-phospho-L-serine + 2-oxoglutarate = 3-phosphooxypyruvate + L-glutamate. It catalyses the reaction 4-(phosphooxy)-L-threonine + 2-oxoglutarate = (R)-3-hydroxy-2-oxo-4-phosphooxybutanoate + L-glutamate. The protein operates within amino-acid biosynthesis; L-serine biosynthesis; L-serine from 3-phospho-D-glycerate: step 2/3. It functions in the pathway cofactor biosynthesis; pyridoxine 5'-phosphate biosynthesis; pyridoxine 5'-phosphate from D-erythrose 4-phosphate: step 3/5. Catalyzes the reversible conversion of 3-phosphohydroxypyruvate to phosphoserine and of 3-hydroxy-2-oxo-4-phosphonooxybutanoate to phosphohydroxythreonine. The sequence is that of Phosphoserine aminotransferase from Azobacteroides pseudotrichonymphae genomovar. CFP2.